A 484-amino-acid chain; its full sequence is MGSNDLINEAYDDSEVVGEERESKSAWMKRWYQLLTSPLDLQLVINEKLEMINWDAYAKSLAKPLGNFLTILFFIIRLLQDNLIKPNYYKLNVKSGAFDLSKSNKLKEFDYLWEISSSFQNSNQFYAFQSWYFVTLRFLNNLFRFTIFILLSLNLYVSCKFMFGYFKTYNLFHLKKEFNSPNLTKHNLKDLSKEYYEDIYKQSLWSMLKHFFRGSRDDGPHVNQNEVEIFFQLRKWIPTNFMINLFVSFSPTAIVFLSFSDVSFTSAIAIVFHQYILDYIITKRFQRSVDDDLILSSAALQEYEDKHIMVRINQCSNIDTLSSAMGTRSKTPRIFTTHSLCGEEIREVYNYEKREFEALPKMTESVPGSRETRIKDYGGISQVSDNQSHPIGFHYSPRMSPYYRDKVLDNNLAQSSSNENLEKGGAFLPNQDQNRPSKSLSPLRKTPLSARQKRFEGSEFNVLNKNDINSILRSPKKKKNYHKR.

Serine 3 is subject to Phosphoserine. Helical transmembrane passes span 145–165 (FTIF…MFGY) and 252–272 (TAIV…AIVF). The disordered stretch occupies residues 416–457 (SSNENLEKGGAFLPNQDQNRPSKSLSPLRKTPLSARQKRFEG). Position 417 is a phosphoserine (serine 417). Polar residues predominate over residues 430-440 (NQDQNRPSKSL). Position 474 is a phosphoserine (serine 474).

It belongs to the NUR1 family. In terms of assembly, interacts with CSM1.

The protein localises to the nucleus membrane. Functionally, member of a perinuclear network that controls recombination at multiple loci to maintain genome stability. Required for rDNA repeat stability. The protein is Nuclear rim protein 1 (NUR1) of Saccharomyces cerevisiae (strain Lalvin EC1118 / Prise de mousse) (Baker's yeast).